Reading from the N-terminus, the 175-residue chain is Orotate phosphoribosyltransferase (175 aa).

Residues Arg89, Lys90, Lys93, and 115–123 (EDIATTGQS) contribute to the 5-phospho-alpha-D-ribose 1-diphosphate site. The orotate site is built by Thr119 and Arg147.

This sequence belongs to the purine/pyrimidine phosphoribosyltransferase family. PyrE subfamily. In terms of assembly, homodimer. The cofactor is Mg(2+).

It catalyses the reaction orotidine 5'-phosphate + diphosphate = orotate + 5-phospho-alpha-D-ribose 1-diphosphate. Its pathway is pyrimidine metabolism; UMP biosynthesis via de novo pathway; UMP from orotate: step 1/2. Its function is as follows. Catalyzes the transfer of a ribosyl phosphate group from 5-phosphoribose 1-diphosphate to orotate, leading to the formation of orotidine monophosphate (OMP). This is Orotate phosphoribosyltransferase from Halobacterium salinarum (strain ATCC 700922 / JCM 11081 / NRC-1) (Halobacterium halobium).